The chain runs to 283 residues: Pyridoxine/pyridoxal/pyridoxamine kinase (283 aa).

Residues Ser23 and His59 each coordinate substrate. Asp125 contacts ATP. Tyr136 contributes to the Mg(2+) binding site. ATP is bound by residues Thr157, Glu162, Thr195, His222–Val225, and Thr232. Glu162 contributes to the Mg(2+) binding site. Substrate is bound at residue Asp234.

Belongs to the pyridoxine kinase family. PdxK subfamily. As to quaternary structure, homodimer. Requires Mg(2+) as cofactor.

The catalysed reaction is pyridoxal + ATP = pyridoxal 5'-phosphate + ADP + H(+). It carries out the reaction pyridoxine + ATP = pyridoxine 5'-phosphate + ADP + H(+). It catalyses the reaction pyridoxamine + ATP = pyridoxamine 5'-phosphate + ADP + H(+). Its pathway is cofactor metabolism; pyridoxal 5'-phosphate salvage; pyridoxal 5'-phosphate from pyridoxal: step 1/1. It participates in cofactor metabolism; pyridoxal 5'-phosphate salvage; pyridoxine 5'-phosphate from pyridoxine: step 1/1. The protein operates within cofactor metabolism; pyridoxal 5'-phosphate salvage; pyridoxamine 5'-phosphate from pyridoxamine: step 1/1. B6-vitamer kinase involved in the salvage pathway of pyridoxal 5'-phosphate (PLP). Catalyzes the phosphorylation of pyridoxine (PN), pyridoxal (PL), and pyridoxamine (PM), forming their respective 5'-phosphorylated esters, i.e. PNP, PLP and PMP. The protein is Pyridoxine/pyridoxal/pyridoxamine kinase of Bordetella pertussis (strain Tohama I / ATCC BAA-589 / NCTC 13251).